Consider the following 375-residue polypeptide: Mitogen-activated protein kinase 4a (375 aa).

The region spanning 39-325 is the Protein kinase domain; the sequence is KPPLRPIGRG…VEAALAHPYL (287 aa). Residues 45–53 and K68 each bind ATP; that span reads IGRGAYGIV. D165 serves as the catalytic Proton acceptor. Position 197 is a phosphothreonine (T197). Residues 197–199 carry the TXY motif; the sequence is TEY. Y199 carries the post-translational modification Phosphotyrosine.

This sequence belongs to the protein kinase superfamily. CMGC Ser/Thr protein kinase family. MAP kinase subfamily. It depends on Mg(2+) as a cofactor. Post-translationally, dually phosphorylated on Thr-197 and Tyr-199, which activates the enzyme. Phosphorylated in response to pathogen-associated molecular pattern (PAMP) chitin and in response to necrotrophic fungus B.cinerea spores. Not phosphorylated in response to osmotic stress. Expressed strongly in the apical cells of caulonemal air filaments and rhizoids in fully developed plants and less strongly, but readily detectable in filamentous protonemal tissue at the edge of the plant consisting of both chloronema and caulonema. When filamentous growth of protonema is promoted, the expression is strongest in newly formed apical tip cells of protonemal tissue.

It localises to the cytoplasm. The protein resides in the nucleus. It catalyses the reaction L-seryl-[protein] + ATP = O-phospho-L-seryl-[protein] + ADP + H(+). The catalysed reaction is L-threonyl-[protein] + ATP = O-phospho-L-threonyl-[protein] + ADP + H(+). Activated by threonine and tyrosine phosphorylation. Activated in response to bacterial and fungal pathogen-associated molecular patterns (PAMPs) including chitin, chitosan and peptidyl glycans (PGNs). Activation in response to chitin requires the CERK1, MEKK1a/b, MKK1a/b/c and MPK4a/b signaling pathway. Activated in response to necrotrophic fungus B.cinerea spores. Not activated in response to osmotic stress. In terms of biological role, the CERK1, MEKK1a/b, MKK1a/b/c and MPK4a/b proteins are involved in pathogen defense. The pathway induces rapid growth inhibition, cell wall depositions and accumulation of defense-related transcripts. This protein is required for innate immunity triggered by pathogen-associated molecular patterns (PAMPs). Involved in resistance to necrotrophic fungi B.cinerea and A.brassicicola. Involved in the transduction of signals from chitosan perception to the activation of defense genes. The chain is Mitogen-activated protein kinase 4a (MPK4a) from Physcomitrium patens (Spreading-leaved earth moss).